Here is a 512-residue protein sequence, read N- to C-terminus: Bifunctional purine biosynthesis protein PurH (512 aa).

The MGS-like domain occupies 1-150; it reads MIGEERVVRA…KNFPAVLVLV (150 aa).

This sequence belongs to the PurH family.

It catalyses the reaction (6R)-10-formyltetrahydrofolate + 5-amino-1-(5-phospho-beta-D-ribosyl)imidazole-4-carboxamide = 5-formamido-1-(5-phospho-D-ribosyl)imidazole-4-carboxamide + (6S)-5,6,7,8-tetrahydrofolate. The enzyme catalyses IMP + H2O = 5-formamido-1-(5-phospho-D-ribosyl)imidazole-4-carboxamide. The protein operates within purine metabolism; IMP biosynthesis via de novo pathway; 5-formamido-1-(5-phospho-D-ribosyl)imidazole-4-carboxamide from 5-amino-1-(5-phospho-D-ribosyl)imidazole-4-carboxamide (10-formyl THF route): step 1/1. It functions in the pathway purine metabolism; IMP biosynthesis via de novo pathway; IMP from 5-formamido-1-(5-phospho-D-ribosyl)imidazole-4-carboxamide: step 1/1. The sequence is that of Bifunctional purine biosynthesis protein PurH from Chloroflexus aurantiacus (strain ATCC 29366 / DSM 635 / J-10-fl).